A 126-amino-acid polypeptide reads, in one-letter code: Phosphoribosyl-AMP cyclohydrolase (126 aa).

Residue aspartate 82 participates in Mg(2+) binding. Cysteine 83 contributes to the Zn(2+) binding site. Mg(2+)-binding residues include aspartate 84 and aspartate 86. Zn(2+) is bound by residues cysteine 99 and cysteine 106.

It belongs to the PRA-CH family. In terms of assembly, homodimer. The cofactor is Mg(2+). It depends on Zn(2+) as a cofactor.

It localises to the cytoplasm. The enzyme catalyses 1-(5-phospho-beta-D-ribosyl)-5'-AMP + H2O = 1-(5-phospho-beta-D-ribosyl)-5-[(5-phospho-beta-D-ribosylamino)methylideneamino]imidazole-4-carboxamide. The protein operates within amino-acid biosynthesis; L-histidine biosynthesis; L-histidine from 5-phospho-alpha-D-ribose 1-diphosphate: step 3/9. Catalyzes the hydrolysis of the adenine ring of phosphoribosyl-AMP. The polypeptide is Phosphoribosyl-AMP cyclohydrolase (Sphingopyxis alaskensis (strain DSM 13593 / LMG 18877 / RB2256) (Sphingomonas alaskensis)).